The chain runs to 97 residues: Defective intron-associated endonuclease 3 (97 aa).

Functionally, this endonuclease is specific to the nrdB gene splice junction and is involved in intron homing. This chain is Defective intron-associated endonuclease 3 (ITEVIIIR), found in Escherichia coli (Bacteriophage T4).